The following is a 401-amino-acid chain: Homocitrate synthase (401 aa).

The 250-residue stretch at 22–271 folds into the Pyruvate carboxyltransferase domain; the sequence is VRFCDTTLRD…KLPIDLDTTS (250 aa). The tract at residues 367-401 is disordered; the sequence is TRHKRGLDSRDLPGTSRAGRDAGPRAGTPTREEPV.

It belongs to the alpha-IPM synthase/homocitrate synthase family.

The enzyme catalyses acetyl-CoA + 2-oxoglutarate + H2O = (2R)-homocitrate + CoA + H(+). Functionally, this protein is a Fe-Mo-cofactor biosynthetic component. This is Homocitrate synthase (nifV) from Frankia sp. (strain FaC1).